Consider the following 868-residue polypeptide: Protein translocase subunit SecA (868 aa).

ATP contacts are provided by residues Gln-88, 106 to 110, and Asp-509; that span reads GEGKT. Residues 816–827 show a composition bias toward polar residues; sequence NAENEPLNYNNQ. The disordered stretch occupies residues 816 to 868; that stretch reads NAENEPLNYNNQGEDENFTPEKKIPRNAPCPCGSGKKYKDCHGKSGPKKGIFA. Zn(2+) is bound by residues Cys-845, Cys-847, Cys-856, and His-857.

It belongs to the SecA family. Monomer and homodimer. Part of the essential Sec protein translocation apparatus which comprises SecA, SecYEG and auxiliary proteins SecDF-YajC and YidC. Zn(2+) is required as a cofactor.

It is found in the cell inner membrane. The protein localises to the cytoplasm. It carries out the reaction ATP + H2O + cellular proteinSide 1 = ADP + phosphate + cellular proteinSide 2.. Part of the Sec protein translocase complex. Interacts with the SecYEG preprotein conducting channel. Has a central role in coupling the hydrolysis of ATP to the transfer of proteins into and across the cell membrane, serving as an ATP-driven molecular motor driving the stepwise translocation of polypeptide chains across the membrane. The chain is Protein translocase subunit SecA from Campylobacter concisus (strain 13826).